The following is a 227-amino-acid chain: Casparian strip membrane protein 2 (227 aa).

The Cytoplasmic segment spans residues 1–59 (MSSTSEATVIHMDGAAGKTPATAVPPPPPPAPTAPVQQQRKAGGVPFLLRSGAEGFRRC). A disordered region spans residues 17–37 (GKTPATAVPPPPPPAPTAPVQ). Positions 23–33 (AVPPPPPPAPT) are enriched in pro residues. Residues 60-80 (MALLDLLLRVAAMGPTLAAAI) traverse the membrane as a helical segment. Over 81-107 (STGTSDETLSVFTHYFQFRARFDDFSA) the chain is Extracellular. The helical transmembrane segment at 108 to 128 (FTFFMVANAVAAGYLLMSLPF) threads the bilayer. Over 129–149 (SAFGVIRPKATSVRLLLLICD) the chain is Cytoplasmic. Residues 150 to 170 (TIMVVLVTAAASAAAAIVYVA) traverse the membrane as a helical segment. Residues 171–197 (HEGNRRANWVPICMQFHGFCKRTSGAV) are Extracellular-facing. A helical transmembrane segment spans residues 198 to 218 (VASFLAVLIFILLVFLGACAI). Topologically, residues 219 to 227 (RRRHTTTKH) are cytoplasmic.

Belongs to the Casparian strip membrane proteins (CASP) family. In terms of assembly, homodimer and heterodimers.

The protein localises to the cell membrane. In terms of biological role, regulates membrane-cell wall junctions and localized cell wall deposition. Required for establishment of the Casparian strip membrane domain (CSD) and the subsequent formation of Casparian strips, a cell wall modification of the root endodermis that determines an apoplastic barrier between the intraorganismal apoplasm and the extraorganismal apoplasm and prevents lateral diffusion. This is Casparian strip membrane protein 2 from Brachypodium distachyon (Purple false brome).